Here is a 595-residue protein sequence, read N- to C-terminus: Glutamyl-tRNA(Gln) amidotransferase subunit B, mitochondrial (595 aa).

The transit peptide at 1 to 114 (MPRLWYSRYL…RAPTSTVAEP (114 aa)) directs the protein to the mitochondrion. Positions 59–78 (KEEAKRSKSQSRNGRGKKQV) are disordered.

Belongs to the GatB/GatE family. GatB subfamily. As to quaternary structure, subunit of the heterotrimeric GatCAB amidotransferase (AdT) complex, composed of A, B and C subunits.

The protein localises to the mitochondrion. It catalyses the reaction L-glutamyl-tRNA(Gln) + L-glutamine + ATP + H2O = L-glutaminyl-tRNA(Gln) + L-glutamate + ADP + phosphate + H(+). In terms of biological role, allows the formation of correctly charged Gln-tRNA(Gln) through the transamidation of misacylated Glu-tRNA(Gln) in the mitochondria. The reaction takes place in the presence of glutamine and ATP through an activated gamma-phospho-Glu-tRNA(Gln). In Talaromyces stipitatus (strain ATCC 10500 / CBS 375.48 / QM 6759 / NRRL 1006) (Penicillium stipitatum), this protein is Glutamyl-tRNA(Gln) amidotransferase subunit B, mitochondrial.